The sequence spans 842 residues: DNA mismatch repair protein MutS (842 aa).

596-603 is an ATP binding site; that stretch reads GPNMSGKS.

This sequence belongs to the DNA mismatch repair MutS family.

Its function is as follows. This protein is involved in the repair of mismatches in DNA. It is possible that it carries out the mismatch recognition step. This protein has a weak ATPase activity. The polypeptide is DNA mismatch repair protein MutS (Exiguobacterium sp. (strain ATCC BAA-1283 / AT1b)).